The following is a 542-amino-acid chain: Chaperonin GroEL (542 aa).

Residues 29 to 32 (TLGP), 86 to 90 (DGTTT), Gly-413, 476 to 478 (NAA), and Asp-492 each bind ATP. The disordered stretch occupies residues 522–542 (PDENGPAAVPDMGMGGMGGMM).

Belongs to the chaperonin (HSP60) family. Forms a cylinder of 14 subunits composed of two heptameric rings stacked back-to-back. Interacts with the co-chaperonin GroES.

It is found in the cytoplasm. It carries out the reaction ATP + H2O + a folded polypeptide = ADP + phosphate + an unfolded polypeptide.. Together with its co-chaperonin GroES, plays an essential role in assisting protein folding. The GroEL-GroES system forms a nano-cage that allows encapsulation of the non-native substrate proteins and provides a physical environment optimized to promote and accelerate protein folding. This is Chaperonin GroEL from Listeria monocytogenes serotype 4b (strain CLIP80459).